Here is a 316-residue protein sequence, read N- to C-terminus: 4-hydroxy-3-methylbut-2-enyl diphosphate reductase (316 aa).

Residue Cys-12 coordinates [4Fe-4S] cluster. (2E)-4-hydroxy-3-methylbut-2-enyl diphosphate contacts are provided by His-41 and His-74. 2 residues coordinate dimethylallyl diphosphate: His-41 and His-74. Isopentenyl diphosphate-binding residues include His-41 and His-74. Residue Cys-96 coordinates [4Fe-4S] cluster. His-124 is a (2E)-4-hydroxy-3-methylbut-2-enyl diphosphate binding site. His-124 is a binding site for dimethylallyl diphosphate. His-124 is a binding site for isopentenyl diphosphate. Glu-126 serves as the catalytic Proton donor. Thr-167 contacts (2E)-4-hydroxy-3-methylbut-2-enyl diphosphate. Cys-197 provides a ligand contact to [4Fe-4S] cluster. 4 residues coordinate (2E)-4-hydroxy-3-methylbut-2-enyl diphosphate: Ser-225, Ser-226, Asn-227, and Ser-269. Positions 225, 226, 227, and 269 each coordinate dimethylallyl diphosphate. 4 residues coordinate isopentenyl diphosphate: Ser-225, Ser-226, Asn-227, and Ser-269.

The protein belongs to the IspH family. As to quaternary structure, homodimer. [4Fe-4S] cluster is required as a cofactor.

It carries out the reaction isopentenyl diphosphate + 2 oxidized [2Fe-2S]-[ferredoxin] + H2O = (2E)-4-hydroxy-3-methylbut-2-enyl diphosphate + 2 reduced [2Fe-2S]-[ferredoxin] + 2 H(+). The enzyme catalyses dimethylallyl diphosphate + 2 oxidized [2Fe-2S]-[ferredoxin] + H2O = (2E)-4-hydroxy-3-methylbut-2-enyl diphosphate + 2 reduced [2Fe-2S]-[ferredoxin] + 2 H(+). The protein operates within isoprenoid biosynthesis; dimethylallyl diphosphate biosynthesis; dimethylallyl diphosphate from (2E)-4-hydroxy-3-methylbutenyl diphosphate: step 1/1. It functions in the pathway isoprenoid biosynthesis; isopentenyl diphosphate biosynthesis via DXP pathway; isopentenyl diphosphate from 1-deoxy-D-xylulose 5-phosphate: step 6/6. In terms of biological role, catalyzes the conversion of 1-hydroxy-2-methyl-2-(E)-butenyl 4-diphosphate (HMBPP) into a mixture of isopentenyl diphosphate (IPP) and dimethylallyl diphosphate (DMAPP). Acts in the terminal step of the DOXP/MEP pathway for isoprenoid precursor biosynthesis. The protein is 4-hydroxy-3-methylbut-2-enyl diphosphate reductase of Salmonella schwarzengrund (strain CVM19633).